A 310-amino-acid polypeptide reads, in one-letter code: Ribosomal RNA small subunit methyltransferase H (310 aa).

Residues 33-35, Asp52, Phe79, Asp98, and Gln105 each bind S-adenosyl-L-methionine; that span reads GGH.

It belongs to the methyltransferase superfamily. RsmH family.

The protein localises to the cytoplasm. The catalysed reaction is cytidine(1402) in 16S rRNA + S-adenosyl-L-methionine = N(4)-methylcytidine(1402) in 16S rRNA + S-adenosyl-L-homocysteine + H(+). Its function is as follows. Specifically methylates the N4 position of cytidine in position 1402 (C1402) of 16S rRNA. The polypeptide is Ribosomal RNA small subunit methyltransferase H (Campylobacter jejuni (strain RM1221)).